Here is a 199-residue protein sequence, read N- to C-terminus: Probable GTP-binding protein EngB (199 aa).

The EngB-type G domain occupies 25 to 199 (IGMEVAFVGY…LKRVLNNWLR (175 aa)). Residues serine 40 and threonine 62 each contribute to the Mg(2+) site.

The protein belongs to the TRAFAC class TrmE-Era-EngA-EngB-Septin-like GTPase superfamily. EngB GTPase family. The cofactor is Mg(2+).

In terms of biological role, necessary for normal cell division and for the maintenance of normal septation. In Blochmanniella pennsylvanica (strain BPEN), this protein is Probable GTP-binding protein EngB.